Consider the following 664-residue polypeptide: Transketolase 1 (664 aa).

Substrate is bound at residue His-26. Thiamine diphosphate-binding positions include His-66 and 114–116 (GPL). Asp-155 is a binding site for Mg(2+). Thiamine diphosphate is bound by residues Gly-156 and Asn-185. Positions 185 and 187 each coordinate Mg(2+). Residues His-260, Arg-357, and Ser-384 each coordinate substrate. His-260 serves as a coordination point for thiamine diphosphate. Residue Glu-411 is the Proton donor of the active site. Phe-437 lines the thiamine diphosphate pocket. The substrate site is built by His-461, Asp-469, and Arg-520.

Belongs to the transketolase family. As to quaternary structure, homodimer. Mg(2+) is required as a cofactor. Ca(2+) serves as cofactor. Requires Mn(2+) as cofactor. It depends on Co(2+) as a cofactor. The cofactor is thiamine diphosphate.

It catalyses the reaction D-sedoheptulose 7-phosphate + D-glyceraldehyde 3-phosphate = aldehydo-D-ribose 5-phosphate + D-xylulose 5-phosphate. In terms of biological role, catalyzes the transfer of a two-carbon ketol group from a ketose donor to an aldose acceptor, via a covalent intermediate with the cofactor thiamine pyrophosphate. The polypeptide is Transketolase 1 (tkt1) (Vibrio parahaemolyticus serotype O3:K6 (strain RIMD 2210633)).